The sequence spans 352 residues: Chorismate synthase (352 aa).

Positions 48 and 54 each coordinate NADP(+). FMN is bound by residues 125-127 (RSS), 238-239 (NA), Gly278, 293-297 (KPTSS), and Arg319.

It belongs to the chorismate synthase family. As to quaternary structure, homotetramer. Requires FMNH2 as cofactor.

The catalysed reaction is 5-O-(1-carboxyvinyl)-3-phosphoshikimate = chorismate + phosphate. It participates in metabolic intermediate biosynthesis; chorismate biosynthesis; chorismate from D-erythrose 4-phosphate and phosphoenolpyruvate: step 7/7. Catalyzes the anti-1,4-elimination of the C-3 phosphate and the C-6 proR hydrogen from 5-enolpyruvylshikimate-3-phosphate (EPSP) to yield chorismate, which is the branch point compound that serves as the starting substrate for the three terminal pathways of aromatic amino acid biosynthesis. This reaction introduces a second double bond into the aromatic ring system. The sequence is that of Chorismate synthase from Bordetella petrii (strain ATCC BAA-461 / DSM 12804 / CCUG 43448).